The chain runs to 486 residues: Argininosuccinate lyase (486 aa).

The protein belongs to the lyase 1 family. Argininosuccinate lyase subfamily.

The protein resides in the cytoplasm. The enzyme catalyses 2-(N(omega)-L-arginino)succinate = fumarate + L-arginine. The protein operates within amino-acid biosynthesis; L-arginine biosynthesis; L-arginine from L-ornithine and carbamoyl phosphate: step 3/3. The polypeptide is Argininosuccinate lyase (Acidovorax ebreus (strain TPSY) (Diaphorobacter sp. (strain TPSY))).